The primary structure comprises 515 residues: AAA ATPase forming ring-shaped complexes (515 aa).

Positions 2–49 (NDHDEETLASLQQANDQLMAKNHALVKALSRATQEMTKTKAQLNQLAG) form a coiled coil. ATP is bound at residue 240–245 (GNGKTL).

This sequence belongs to the AAA ATPase family. As to quaternary structure, homohexamer. Assembles into a hexameric ring structure.

The sequence is that of AAA ATPase forming ring-shaped complexes from Bifidobacterium adolescentis (strain ATCC 15703 / DSM 20083 / NCTC 11814 / E194a).